A 132-amino-acid polypeptide reads, in one-letter code: Agouti-signaling protein (132 aa).

An N-terminal signal peptide occupies residues 1–22 (MDVTRLLLATLLVFLCFFTAYS). The N-linked (GlcNAc...) asparagine glycan is linked to Asn-39. Residues 62 to 88 (ISRKEAEKKRSSKKEASMKKVARPRTP) form a disordered region. Residues 63 to 79 (SRKEAEKKRSSKKEASM) are compositionally biased toward basic and acidic residues. 5 disulfides stabilise this stretch: Cys-93–Cys-108, Cys-100–Cys-114, Cys-107–Cys-125, Cys-111–Cys-132, and Cys-116–Cys-123. The Agouti domain occupies 93–132 (CVATRDSCKPPAPACCDPCASCQCRFFRSACSCRVLSLNC).

Its subcellular location is the secreted. Functionally, involved in the regulation of melanogenesis. The binding of ASP to MC1R precludes alpha-MSH initiated signaling and thus blocks production of cAMP, leading to a down-regulation of eumelanogenesis (brown/black pigment) and thus increasing synthesis of pheomelanin (yellow/red pigment). The sequence is that of Agouti-signaling protein (ASIP) from Macaca radiata (Bonnet macaque).